A 217-amino-acid polypeptide reads, in one-letter code: Cytidylate kinase (217 aa).

11–19 serves as a coordination point for ATP; that stretch reads GPAGAGKST.

Belongs to the cytidylate kinase family. Type 1 subfamily.

The protein resides in the cytoplasm. It carries out the reaction CMP + ATP = CDP + ADP. The enzyme catalyses dCMP + ATP = dCDP + ADP. In Clostridium perfringens (strain SM101 / Type A), this protein is Cytidylate kinase.